Here is a 146-residue protein sequence, read N- to C-terminus: Large-conductance mechanosensitive channel (146 aa).

3 helical membrane-spanning segments follow: residues 21–41, 44–64, and 83–103; these read VGII…ADLI, IIGL…LGDG, and GSFI…FLLV.

This sequence belongs to the MscL family. Homopentamer.

Its subcellular location is the cell inner membrane. In terms of biological role, channel that opens in response to stretch forces in the membrane lipid bilayer. May participate in the regulation of osmotic pressure changes within the cell. This Cereibacter sphaeroides (strain ATCC 17023 / DSM 158 / JCM 6121 / CCUG 31486 / LMG 2827 / NBRC 12203 / NCIMB 8253 / ATH 2.4.1.) (Rhodobacter sphaeroides) protein is Large-conductance mechanosensitive channel.